We begin with the raw amino-acid sequence, 127 residues long: Aspartate 1-decarboxylase (127 aa).

Residue S25 is the Schiff-base intermediate with substrate; via pyruvic acid of the active site. A Pyruvic acid (Ser) modification is found at S25. A substrate-binding site is contributed by T57. Residue Y58 is the Proton donor of the active site. 73–75 (GAA) is a binding site for substrate.

This sequence belongs to the PanD family. As to quaternary structure, heterooctamer of four alpha and four beta subunits. Pyruvate serves as cofactor. Is synthesized initially as an inactive proenzyme, which is activated by self-cleavage at a specific serine bond to produce a beta-subunit with a hydroxyl group at its C-terminus and an alpha-subunit with a pyruvoyl group at its N-terminus.

Its subcellular location is the cytoplasm. The enzyme catalyses L-aspartate + H(+) = beta-alanine + CO2. The protein operates within cofactor biosynthesis; (R)-pantothenate biosynthesis; beta-alanine from L-aspartate: step 1/1. Catalyzes the pyruvoyl-dependent decarboxylation of aspartate to produce beta-alanine. This Bacillus pumilus (strain SAFR-032) protein is Aspartate 1-decarboxylase.